The sequence spans 161 residues: Capsid protein (161 aa).

It belongs to the virgaviridae capsid protein family.

It is found in the virion. Functionally, capsid protein self-assembles to form rod-shaped virions about 18 nm in diameter with a central canal enclosing the viral genomic RNA. The chain is Capsid protein (CP) from Capsicum annuum (Capsicum pepper).